Consider the following 517-residue polypeptide: Cytochrome P450 52A8 (517 aa).

Cysteine 464 lines the heme pocket.

It belongs to the cytochrome P450 family. Requires heme as cofactor.

Together with an NADPH cytochrome P450 the enzyme system catalyzes the terminal hydroxylation as the first step in the assimilation of alkanes and fatty acids. Preferentially hydroxylates lauric acid. This Candida tropicalis (Yeast) protein is Cytochrome P450 52A8 (CYP52A8).